Consider the following 81-residue polypeptide: ATP synthase subunit c (81 aa).

Helical transmembrane passes span Phe7–Ile27 and Phe53–Phe73.

The protein belongs to the ATPase C chain family. F-type ATPases have 2 components, F(1) - the catalytic core - and F(0) - the membrane proton channel. F(1) has five subunits: alpha(3), beta(3), gamma(1), delta(1), epsilon(1). F(0) has three main subunits: a(1), b(2) and c(10-14). The alpha and beta chains form an alternating ring which encloses part of the gamma chain. F(1) is attached to F(0) by a central stalk formed by the gamma and epsilon chains, while a peripheral stalk is formed by the delta and b chains.

The protein resides in the cell inner membrane. In terms of biological role, f(1)F(0) ATP synthase produces ATP from ADP in the presence of a proton or sodium gradient. F-type ATPases consist of two structural domains, F(1) containing the extramembraneous catalytic core and F(0) containing the membrane proton channel, linked together by a central stalk and a peripheral stalk. During catalysis, ATP synthesis in the catalytic domain of F(1) is coupled via a rotary mechanism of the central stalk subunits to proton translocation. Key component of the F(0) channel; it plays a direct role in translocation across the membrane. A homomeric c-ring of between 10-14 subunits forms the central stalk rotor element with the F(1) delta and epsilon subunits. In Azoarcus sp. (strain BH72), this protein is ATP synthase subunit c.